We begin with the raw amino-acid sequence, 483 residues long: V-type proton ATPase subunit H (483 aa).

Serine 483 carries the post-translational modification Phosphoserine.

The protein belongs to the V-ATPase H subunit family. V-ATPase is a heteromultimeric enzyme made up of two complexes: the ATP-hydrolytic V1 complex and the proton translocation V0 complex. The V1 complex consists of three catalytic AB heterodimers that form a heterohexamer, three peripheral stalks each consisting of EG heterodimers, one central rotor including subunits D and F, and the regulatory subunits C and H. The proton translocation complex V0 consists of the proton transport subunit a, a ring of proteolipid subunits c9c'', rotary subunit d, subunits e and f, and the accessory subunits ATP6AP1/Ac45 and ATP6AP2/PRR. Interacts with AP2M1. Interacts with TM9SF4 in colon cancer cells. As to quaternary structure, (Microbial infection) Interacts with HIV-1 Nef protein. In terms of assembly, (Microbial infection) Interacts with M.tuberculosis PtpA, which blocks V-ATPase trafficking and phagosome acidification. Widely expressed.

It is found in the cytoplasmic vesicle. Its subcellular location is the clathrin-coated vesicle membrane. In terms of biological role, subunit of the V1 complex of vacuolar(H+)-ATPase (V-ATPase), a multisubunit enzyme composed of a peripheral complex (V1) that hydrolyzes ATP and a membrane integral complex (V0) that translocates protons. V-ATPase is responsible for acidifying and maintaining the pH of intracellular compartments and in some cell types, is targeted to the plasma membrane, where it is responsible for acidifying the extracellular environment. Subunit H is essential for V-ATPase activity, but not for the assembly of the complex. Involved in the endocytosis mediated by clathrin-coated pits, required for the formation of endosomes. This Homo sapiens (Human) protein is V-type proton ATPase subunit H (ATP6V1H).